A 143-amino-acid polypeptide reads, in one-letter code: Probable cyclic pyranopterin monophosphate synthase (143 aa).

Residues 61 to 63 (YCH) and 97 to 98 (ME) each bind substrate. Residue Asp-112 is part of the active site.

The protein belongs to the MoaC family. As to quaternary structure, homohexamer; trimer of dimers.

The catalysed reaction is (8S)-3',8-cyclo-7,8-dihydroguanosine 5'-triphosphate = cyclic pyranopterin phosphate + diphosphate. Its pathway is cofactor biosynthesis; molybdopterin biosynthesis. Its function is as follows. Catalyzes the conversion of (8S)-3',8-cyclo-7,8-dihydroguanosine 5'-triphosphate to cyclic pyranopterin monophosphate (cPMP). In Thermoplasma acidophilum (strain ATCC 25905 / DSM 1728 / JCM 9062 / NBRC 15155 / AMRC-C165), this protein is Probable cyclic pyranopterin monophosphate synthase.